A 332-amino-acid chain; its full sequence is Fructose-1,6-bisphosphatase class 1 1 (332 aa).

Glutamate 92, aspartate 115, leucine 117, and aspartate 118 together coordinate Mg(2+). Residues 118–121 (DGSS), asparagine 211, tyrosine 244, 262–264 (YLY), and lysine 274 each bind substrate. Mg(2+) is bound at residue glutamate 280.

Belongs to the FBPase class 1 family. As to quaternary structure, homotetramer. It depends on Mg(2+) as a cofactor.

It is found in the cytoplasm. The catalysed reaction is beta-D-fructose 1,6-bisphosphate + H2O = beta-D-fructose 6-phosphate + phosphate. Its pathway is carbohydrate biosynthesis; gluconeogenesis. In Christiangramia forsetii (strain DSM 17595 / CGMCC 1.15422 / KT0803) (Gramella forsetii), this protein is Fructose-1,6-bisphosphatase class 1 1.